A 36-amino-acid chain; its full sequence is Pancreatic polypeptide (36 aa).

Phe36 is modified (phenylalanine amide).

It belongs to the NPY family.

It localises to the secreted. Its function is as follows. Hormone secreted by pancreatic cells that acts as a regulator of pancreatic and gastrointestinal functions. This chain is Pancreatic polypeptide (ppy), found in Alligator mississippiensis (American alligator).